A 238-amino-acid polypeptide reads, in one-letter code: D-aminoacyl-tRNA deacylase (238 aa).

It belongs to the DtdA deacylase family. As to quaternary structure, monomer. Zn(2+) serves as cofactor.

It carries out the reaction a D-aminoacyl-tRNA + H2O = a tRNA + a D-alpha-amino acid + H(+). It catalyses the reaction glycyl-tRNA(Ala) + H2O = tRNA(Ala) + glycine + H(+). The catalysed reaction is D-tyrosyl-tRNA(Tyr) + H2O = D-tyrosine + tRNA(Tyr). Functionally, D-aminoacyl-tRNA deacylase with broad substrate specificity. By recycling D-aminoacyl-tRNA to D-amino acids and free tRNA molecules, this enzyme counteracts the toxicity associated with the formation of D-aminoacyl-tRNA entities in vivo. Catalyzes the hydrolysis of D-tyrosyl-tRNA(Tyr). This is D-aminoacyl-tRNA deacylase from Saccharolobus solfataricus (strain ATCC 35092 / DSM 1617 / JCM 11322 / P2) (Sulfolobus solfataricus).